A 665-amino-acid chain; its full sequence is Transketolase (665 aa).

Residue His-26 coordinates substrate. Thiamine diphosphate is bound by residues His-66 and 114-116 (GPL). Mg(2+) is bound at residue Asp-155. Thiamine diphosphate-binding residues include Gly-156 and Asn-185. Mg(2+) contacts are provided by Asn-185 and Ile-187. The substrate site is built by His-261, Arg-358, and Ser-385. Position 261 (His-261) interacts with thiamine diphosphate. The active-site Proton donor is the Glu-411. Thiamine diphosphate is bound at residue Phe-437. Residues His-461, Asp-469, and Arg-520 each coordinate substrate.

It belongs to the transketolase family. In terms of assembly, homodimer. Mg(2+) serves as cofactor. Requires Ca(2+) as cofactor. The cofactor is Mn(2+). Co(2+) is required as a cofactor. It depends on thiamine diphosphate as a cofactor.

The enzyme catalyses D-sedoheptulose 7-phosphate + D-glyceraldehyde 3-phosphate = aldehydo-D-ribose 5-phosphate + D-xylulose 5-phosphate. Its function is as follows. Catalyzes the transfer of a two-carbon ketol group from a ketose donor to an aldose acceptor, via a covalent intermediate with the cofactor thiamine pyrophosphate. The protein is Transketolase (tkt) of Buchnera aphidicola subsp. Schizaphis graminum (strain Sg).